We begin with the raw amino-acid sequence, 573 residues long: Multidrug and toxin extrusion protein 2 (573 aa).

Over 1 to 46 the chain is Cytoplasmic; the sequence is MEPAEDSLGATIQPPELVRVPRGRSLRILLGLRGALSPDVRREAAA. The helical transmembrane segment at 47–67 threads the bilayer; the sequence is LVALAGPVFLAQLMIFLISIV. Residues 68-81 are Extracellular-facing; the sequence is SSIFCGHLGKVELD. Residues 82-102 traverse the membrane as a helical segment; sequence AVTLAVSVVNVTGISVGTGLA. At 103 to 122 the chain is on the cytoplasmic side; sequence SACDTLMSQSFGGKNLKRVG. The helical transmembrane segment at 123 to 143 threads the bilayer; it reads VILQRGILILLLCCFPCWAIF. Topologically, residues 144 to 161 are extracellular; sequence LNTERLLLLLRQDPDVAR. The chain crosses the membrane as a helical span at residues 162–182; it reads LAQVYVMICIPALPAAFLFQL. Topologically, residues 183–196 are cytoplasmic; sequence QTRYLQSQGIIMPQ. Residues 197-217 form a helical membrane-spanning segment; that stretch reads VIVGIAANVVNVGMNAFLLYA. Residues 218–225 are Extracellular-facing; sequence LDLGVVGS. A helical transmembrane segment spans residues 226–246; sequence AWANTTSQFFLSALLFLYVWW. The Cytoplasmic segment spans residues 247-266; sequence KRIHIHTWGGWTRECFQEWS. The chain crosses the membrane as a helical span at residues 267-286; it reads SYTRLAIPSMFMVCIEWWTF. Residues 287–304 lie on the Extracellular side of the membrane; that stretch reads EIGTFLAGLVNVTELGAQ. The chain crosses the membrane as a helical span at residues 305 to 325; it reads AVIYELASVAYMVPFGFGVAA. At 326 to 345 the chain is on the cytoplasmic side; the sequence is SVRVGNALGAGNADQARCSC. A helical transmembrane segment spans residues 346–366; it reads TTVLLCAGVCALLVGILLAAL. At 367-379 the chain is on the extracellular side; it reads KDVVAYIFTNDKD. The chain crosses the membrane as a helical span at residues 380 to 400; that stretch reads IISLVSQVMPIFAPFHLFDAL. Residues 401-415 lie on the Cytoplasmic side of the membrane; the sequence is AGTCGGVLRGTGKQK. Residues 416–436 form a helical membrane-spanning segment; it reads IGAVLNTIGYYGFGFPIGVSL. At 437-443 the chain is on the extracellular side; it reads MFAAKLG. Residues 444-464 traverse the membrane as a helical segment; it reads IIGLWAGLIVCVSFQAFSYLI. Residues 465-545 lie on the Cytoplasmic side of the membrane; sequence YILRTNWSRV…VGEVLTGRQL (81 aa). A helical membrane pass occupies residues 546–566; sequence VFYRGMALTVSVAVLIAGIVV. Residues 567–573 lie on the Extracellular side of the membrane; it reads RVFNDRG.

The protein belongs to the multi antimicrobial extrusion (MATE) (TC 2.A.66.1) family. As to expression, expressed in testis; especially in testicular Leydig cells.

The protein resides in the cell membrane. Multidrug efflux pump that functions as a H(+)/organic cation antiporter. May mediate testosterone efflux from the Leydig cells in the testes. The polypeptide is Multidrug and toxin extrusion protein 2 (Slc47a2) (Mus musculus (Mouse)).